Consider the following 468-residue polypeptide: WD repeat-containing protein 55 homolog (468 aa).

Positions 1 to 107 are disordered; it reads MRNFNSPKFG…VPKRVIDDYD (107 aa). Composition is skewed to acidic residues over residues 15–26, 41–58, and 67–91; these read DDSDDDDFDSGT, PITE…EYNP, and SDDE…DGED. WD repeat units lie at residues 134-173, 178-217, 221-259, 262-301, 304-343, and 388-427; these read KTED…CTIV, THTK…LKRF, AHEE…PVFK, EVED…MYVQ, PYEE…YHCD, and QHSL…EFDD.

Belongs to the WD repeat WDR55 family.

The polypeptide is WD repeat-containing protein 55 homolog (Aedes aegypti (Yellowfever mosquito)).